Here is a 450-residue protein sequence, read N- to C-terminus: MLDKLGQNLSDALNKLKNATFVDKKLVKEVIKDIQKALIQSDVNVKLVFNMSKEIERKAIDEAPPKGLSKKEHIVKIVYDELVKLLGETTQKLELDPSKKSVILLIGIQGSGKTTSAAKLARYIQKKGLRPGLIAADVYRPAAYQQLKQLSEKINVPLFGDETRTKTPVEITKEGMEKLKKVDVIIIDTAGRHKEEEGLLAEMKEMKDLTNPNEIILVIDGTLGQQAKNQAKAFKESVSEIGSILVTKLDGSAKGGGALSAVAEINAPIKFIGTGEGVDNLEQFDPKKFISRILGLGDLDSLLEKTEDIMDESTEESIDSILKGKFTLIELYAQLETISKMGPMKQILSMIPGMGGNMPKEAAQLTEAKLKRYKIMMDSMTMEEKENPELIKTSRLQRIAKGAGVKQEEIKDLLKYYSTTKNAFGNLKRGKMPKMGGQMGQIMRQLMYKD.

GTP-binding positions include 107 to 114 (GIQGSGKT), 188 to 192 (DTAGR), and 247 to 250 (TKLD).

The protein belongs to the GTP-binding SRP family. SRP54 subfamily. Part of the signal recognition particle protein translocation system, which is composed of SRP and FtsY. Archaeal SRP consists of a 7S RNA molecule of 300 nucleotides and two protein subunits: SRP54 and SRP19.

It is found in the cytoplasm. The enzyme catalyses GTP + H2O = GDP + phosphate + H(+). Functionally, involved in targeting and insertion of nascent membrane proteins into the cytoplasmic membrane. Binds to the hydrophobic signal sequence of the ribosome-nascent chain (RNC) as it emerges from the ribosomes. The SRP-RNC complex is then targeted to the cytoplasmic membrane where it interacts with the SRP receptor FtsY. This Methanococcus maripaludis (strain DSM 14266 / JCM 13030 / NBRC 101832 / S2 / LL) protein is Signal recognition particle 54 kDa protein.